Here is a 607-residue protein sequence, read N- to C-terminus: Glutamyl-tRNA(Gln) amidotransferase subunit E (607 aa).

Belongs to the GatB/GatE family. GatE subfamily. In terms of assembly, heterodimer of GatD and GatE.

It carries out the reaction L-glutamyl-tRNA(Gln) + L-glutamine + ATP + H2O = L-glutaminyl-tRNA(Gln) + L-glutamate + ADP + phosphate + H(+). Allows the formation of correctly charged Gln-tRNA(Gln) through the transamidation of misacylated Glu-tRNA(Gln) in organisms which lack glutaminyl-tRNA synthetase. The reaction takes place in the presence of glutamine and ATP through an activated gamma-phospho-Glu-tRNA(Gln). The GatDE system is specific for glutamate and does not act on aspartate. The sequence is that of Glutamyl-tRNA(Gln) amidotransferase subunit E from Pyrobaculum islandicum (strain DSM 4184 / JCM 9189 / GEO3).